We begin with the raw amino-acid sequence, 305 residues long: Heterogeneous nuclear ribonucleoprotein A0 (305 aa).

Met-1 carries the N-acetylmethionine modification. Residues 7–86 (CKLFIGGLNV…VELKRAVSRE (80 aa)) enclose the RRM 1 domain. Ser-68 carries the post-translational modification Phosphoserine. Residue Lys-80 forms a Glycyl lysine isopeptide (Lys-Gly) (interchain with G-Cter in SUMO2) linkage. Phosphoserine; by MAPKAPK2 is present on Ser-84. Residues Lys-96, Lys-98, Lys-99, and Lys-106 each participate in a glycyl lysine isopeptide (Lys-Gly) (interchain with G-Cter in SUMO2) cross-link. One can recognise an RRM 2 domain in the interval 98–175 (KKLFVGGLKG…HRVEVKKAVP (78 aa)). Lys-133 carries the post-translational modification N6-acetyllysine. Omega-N-methylarginine is present on Arg-139. Glycyl lysine isopeptide (Lys-Gly) (interchain with G-Cter in SUMO2) cross-links involve residues Lys-154, Lys-159, Lys-172, and Lys-176. Disordered regions lie at residues 174–214 (VPKE…KGGG) and 262–305 (QSSY…GSSF). 2 stretches are compositionally biased toward gly residues: residues 181–200 (SGGG…GRGR) and 269–281 (KSGG…GSSW). Ser-188 carries the phosphoserine modification. Arg-284 is modified (omega-N-methylarginine). Residues 290–305 (YRGGYGGGGGYGGSSF) are compositionally biased toward gly residues. Arg-291 carries the post-translational modification Asymmetric dimethylarginine; alternate. Arg-291 carries the post-translational modification Dimethylated arginine; alternate. An Omega-N-methylarginine; alternate modification is found at Arg-291.

In terms of processing, phosphorylated at Ser-84 by MAPKAPK2 in response to LPS treatment, promoting stabilization of GADD45A mRNA. Post-translationally, arg-291 is dimethylated, probably to asymmetric dimethylarginine.

It is found in the nucleus. In terms of biological role, mRNA-binding component of ribonucleosomes. Specifically binds AU-rich element (ARE)-containing mRNAs. Involved in post-transcriptional regulation of cytokines mRNAs. In Homo sapiens (Human), this protein is Heterogeneous nuclear ribonucleoprotein A0 (HNRNPA0).